Here is a 1358-residue protein sequence, read N- to C-terminus: Retrotransposon-like protein 1 (1358 aa).

Disordered stretches follow at residues Met-1 to Ser-159 and Ala-563 to Trp-616. Positions Ser-19 to Ser-30 are enriched in low complexity. Over residues Glu-65–Glu-79 the composition is skewed to acidic residues. Residues Ala-131–Thr-149 show a composition bias toward basic and acidic residues. The segment covering Gly-583–Pro-592 has biased composition (acidic residues). Transmembrane regions (helical) follow at residues Leu-1083–Leu-1099 and Leu-1126–Leu-1146. Disordered regions lie at residues Asp-1250–Leu-1283 and Gln-1338–Asp-1358. Low complexity predominate over residues Ala-1267–His-1276. A compositionally biased stretch (basic and acidic residues) spans Gln-1338 to Glu-1347. Over residues Leu-1348–Asp-1358 the composition is skewed to acidic residues.

It localises to the membrane. Its function is as follows. Plays an essential role in capillaries endothelial cells for the maintenance of feto-maternal interface and for development of the placenta. In Homo sapiens (Human), this protein is Retrotransposon-like protein 1 (RTL1).